An 848-amino-acid chain; its full sequence is DNA mismatch repair protein MutS (848 aa).

Residue 605–612 (GPNMAGKS) participates in ATP binding.

The protein belongs to the DNA mismatch repair MutS family.

This protein is involved in the repair of mismatches in DNA. It is possible that it carries out the mismatch recognition step. This protein has a weak ATPase activity. The chain is DNA mismatch repair protein MutS from Leptospira borgpetersenii serovar Hardjo-bovis (strain JB197).